An 875-amino-acid chain; its full sequence is Probable ubiquitin carboxyl-terminal hydrolase 7 (875 aa).

Residues 54 to 167 (KECSHLKKGV…RDVQQFICSN (114 aa)) form a UBP-type zinc finger. The Zn(2+) site is built by Cys-56, His-58, Cys-83, Cys-86, Cys-101, Cys-104, Cys-109, His-116, His-120, His-127, Cys-140, and Cys-143. The region spanning 208-875 (PGLKNLGATC…EAYMLFYERV (668 aa)) is the USP domain. Cys-217 functions as the Nucleophile in the catalytic mechanism. Residues Ser-333 and Ser-337 each carry the phosphoserine modification. Residues 396-486 (YSKELSQSSD…ASPKKEVLKS (91 aa)) are disordered. Positions 401 to 438 (SQSSDSSQHQHDSFLPANSSPLAASSTKSLPSSELLDS) are enriched in low complexity. The segment covering 473–484 (NHEEASPKKEVL) has biased composition (basic and acidic residues). A phosphoserine mark is found at Ser-486 and Ser-493. A compositionally biased stretch (basic residues) spans 575 to 586 (RSRFSRSPKKSS). Residues 575–628 (RSRFSRSPKKSSVKIVVDNANDDTDQAPTTNSSSLNENLLGGHASENDKSLKQS) are disordered. Residues 600–611 (QAPTTNSSSLNE) show a composition bias toward polar residues. Ser-645 is modified (phosphoserine). His-812 acts as the Proton acceptor in catalysis.

The protein belongs to the peptidase C19 family.

The enzyme catalyses Thiol-dependent hydrolysis of ester, thioester, amide, peptide and isopeptide bonds formed by the C-terminal Gly of ubiquitin (a 76-residue protein attached to proteins as an intracellular targeting signal).. This chain is Probable ubiquitin carboxyl-terminal hydrolase 7 (ubp7), found in Schizosaccharomyces pombe (strain 972 / ATCC 24843) (Fission yeast).